Reading from the N-terminus, the 215-residue chain is 24 kDa Ras-like protein (215 aa).

Residue 17–24 (GGGGVGKS) coordinates GTP. An Effector region motif is present at residues 39 to 47 (YDPTIEDSY). Residues 64–68 (DTAGQ) and 123–126 (NKCD) each bind GTP. Residues 179 to 199 (QTGRPAIAAGGGGPAGSYTQD) form a disordered region. Position 212 is a cysteine methyl ester (cysteine 212). A lipid anchor (S-farnesyl cysteine) is attached at cysteine 212. Residues 213–215 (VIA) constitute a propeptide, removed in mature form.

This sequence belongs to the small GTPase superfamily. Ras family.

The protein localises to the cell membrane. The catalysed reaction is GTP + H2O = GDP + phosphate + H(+). In terms of biological role, ras proteins bind GDP/GTP and possess intrinsic GTPase activity. In Coprinopsis cinerea (strain Okayama-7 / 130 / ATCC MYA-4618 / FGSC 9003) (Inky cap fungus), this protein is 24 kDa Ras-like protein (CC-RAS).